The primary structure comprises 477 residues: Glycogen synthase (477 aa).

Lysine 15 provides a ligand contact to ADP-alpha-D-glucose.

The protein belongs to the glycosyltransferase 1 family. Bacterial/plant glycogen synthase subfamily.

It carries out the reaction [(1-&gt;4)-alpha-D-glucosyl](n) + ADP-alpha-D-glucose = [(1-&gt;4)-alpha-D-glucosyl](n+1) + ADP + H(+). It participates in glycan biosynthesis; glycogen biosynthesis. Its function is as follows. Synthesizes alpha-1,4-glucan chains using ADP-glucose. The polypeptide is Glycogen synthase (Streptococcus pneumoniae (strain Hungary19A-6)).